We begin with the raw amino-acid sequence, 129 residues long: NHP2-like protein 1 homolog (129 aa).

This sequence belongs to the eukaryotic ribosomal protein eL8 family.

It is found in the nucleus. The protein localises to the nucleolus. In terms of biological role, binds to the 5'-stem-loop of U4 snRNA and may play a role in the late stage of spliceosome assembly. The protein undergoes a conformational change upon RNA-binding. This is NHP2-like protein 1 homolog from Dictyostelium discoideum (Social amoeba).